A 233-amino-acid chain; its full sequence is Large ribosomal subunit protein uL1 (233 aa).

It belongs to the universal ribosomal protein uL1 family. Part of the 50S ribosomal subunit.

Functionally, binds directly to 23S rRNA. The L1 stalk is quite mobile in the ribosome, and is involved in E site tRNA release. Protein L1 is also a translational repressor protein, it controls the translation of the L11 operon by binding to its mRNA. This is Large ribosomal subunit protein uL1 from Psychrobacter arcticus (strain DSM 17307 / VKM B-2377 / 273-4).